The following is a 298-amino-acid chain: Protease HtpX homolog (298 aa).

2 helical membrane passes run 15–35 and 39–59; these read LIMVLFVVILTLVGAGLGYLF and PWMGIIIALAGSLIYLLIMWQ. H143 contributes to the Zn(2+) binding site. E144 is a catalytic residue. Residue H147 participates in Zn(2+) binding. 2 consecutive transmembrane segments (helical) span residues 153–173 and 197–217; these read ILLSTIAVVLVGVISFISGMA and MIFKVVAIVFVLILGPLSASL. Zn(2+) is bound at residue E227.

This sequence belongs to the peptidase M48B family. Requires Zn(2+) as cofactor.

The protein resides in the cell membrane. The chain is Protease HtpX homolog from Lactobacillus helveticus (strain DPC 4571).